A 370-amino-acid polypeptide reads, in one-letter code: NADH-quinone oxidoreductase subunit D 2 (370 aa).

Belongs to the complex I 49 kDa subunit family. NDH-1 is composed of 14 different subunits. Subunits NuoB, C, D, E, F, and G constitute the peripheral sector of the complex.

The protein localises to the cell inner membrane. It carries out the reaction a quinone + NADH + 5 H(+)(in) = a quinol + NAD(+) + 4 H(+)(out). Its function is as follows. NDH-1 shuttles electrons from NADH, via FMN and iron-sulfur (Fe-S) centers, to quinones in the respiratory chain. The immediate electron acceptor for the enzyme in this species is believed to be ubiquinone. Couples the redox reaction to proton translocation (for every two electrons transferred, four hydrogen ions are translocated across the cytoplasmic membrane), and thus conserves the redox energy in a proton gradient. This chain is NADH-quinone oxidoreductase subunit D 2, found in Solibacter usitatus (strain Ellin6076).